The chain runs to 99 residues: NADH-quinone oxidoreductase subunit K (99 aa).

The next 3 helical transmembrane spans lie at 2–22, 28–48, and 60–80; these read PVEY…LGVL, LILM…FLAF, and IAFF…AVVI.

The protein belongs to the complex I subunit 4L family. As to quaternary structure, NDH-1 is composed of 14 different subunits. Subunits NuoA, H, J, K, L, M, N constitute the membrane sector of the complex.

It localises to the cell inner membrane. It catalyses the reaction a quinone + NADH + 5 H(+)(in) = a quinol + NAD(+) + 4 H(+)(out). In terms of biological role, NDH-1 shuttles electrons from NADH, via FMN and iron-sulfur (Fe-S) centers, to quinones in the respiratory chain. The immediate electron acceptor for the enzyme in this species is believed to be ubiquinone. Couples the redox reaction to proton translocation (for every two electrons transferred, four hydrogen ions are translocated across the cytoplasmic membrane), and thus conserves the redox energy in a proton gradient. In Anaeromyxobacter dehalogenans (strain 2CP-C), this protein is NADH-quinone oxidoreductase subunit K.